Reading from the N-terminus, the 457-residue chain is Ribulose bisphosphate carboxylase large chain (457 aa).

The propeptide occupies 1 to 2 (MS). Pro-3 is modified (N-acetylproline). Lys-14 is modified (N6,N6,N6-trimethyllysine). Residues Asn-123 and Thr-173 each contribute to the substrate site. The active-site Proton acceptor is Lys-175. Lys-177 serves as a coordination point for substrate. Lys-201, Asp-203, and Glu-204 together coordinate Mg(2+). Lys-201 carries the N6-carboxylysine modification. The Proton acceptor role is filled by His-294. 3 residues coordinate substrate: Arg-295, His-327, and Ser-379.

Belongs to the RuBisCO large chain family. Type I subfamily. As to quaternary structure, heterohexadecamer of 8 large chains and 8 small chains; disulfide-linked. The disulfide link is formed within the large subunit homodimers. The cofactor is Mg(2+). Post-translationally, the disulfide bond which can form in the large chain dimeric partners within the hexadecamer appears to be associated with oxidative stress and protein turnover.

It localises to the plastid. It is found in the chloroplast. The enzyme catalyses 2 (2R)-3-phosphoglycerate + 2 H(+) = D-ribulose 1,5-bisphosphate + CO2 + H2O. The catalysed reaction is D-ribulose 1,5-bisphosphate + O2 = 2-phosphoglycolate + (2R)-3-phosphoglycerate + 2 H(+). In terms of biological role, ruBisCO catalyzes two reactions: the carboxylation of D-ribulose 1,5-bisphosphate, the primary event in carbon dioxide fixation, as well as the oxidative fragmentation of the pentose substrate in the photorespiration process. Both reactions occur simultaneously and in competition at the same active site. This is Ribulose bisphosphate carboxylase large chain from Phelline comosa.